Consider the following 300-residue polypeptide: UPF0282 protein TON_1363 (300 aa).

The protein belongs to the UPF0282 family.

The chain is UPF0282 protein TON_1363 from Thermococcus onnurineus (strain NA1).